Consider the following 461-residue polypeptide: Argininosuccinate lyase (461 aa).

This sequence belongs to the lyase 1 family. Argininosuccinate lyase subfamily.

It is found in the cytoplasm. It carries out the reaction 2-(N(omega)-L-arginino)succinate = fumarate + L-arginine. It functions in the pathway amino-acid biosynthesis; L-arginine biosynthesis; L-arginine from L-ornithine and carbamoyl phosphate: step 3/3. The chain is Argininosuccinate lyase from Nitrosomonas eutropha (strain DSM 101675 / C91 / Nm57).